Reading from the N-terminus, the 214-residue chain is DELTA-actitoxin-Aeq1a (214 aa).

Residues 1–19 form the signal peptide; it reads MSRLIIVFIVVTMICSATA. Residues 20–35 constitute a propeptide that is removed on maturation; the sequence is LPSKKIIDEDEEDEKR. The segment at 38–47 is plays an important role in the hemolytic activity; that stretch reads DVAGAVIDGA. Positions 46–65 are N-terminal region; that stretch reads GASLSFDILKTVLEALGNVK. Positions 89, 122, 140, 142, 168, 172, and 173 each coordinate phosphocholine. The interval 140-155 is trp-rich region, which is important for the binding to lipid membrane; sequence SVPYDYNWYSNWWNVR. Positions 179–181 match the Cell attachment site, crucial for protein stability motif; sequence RGD.

It belongs to the actinoporin family. Sea anemone subfamily. As to quaternary structure, octamer or nonamer in membranes. Monomer in the soluble state.

It localises to the secreted. Its subcellular location is the nematocyst. The protein resides in the target cell membrane. In terms of biological role, pore-forming protein that forms cations-selective hydrophilic pores of around 1 nm and causes cardiac stimulation and cytolysis. Pore formation is a multi-step process that involves specific recognition of membrane sphingomyelin (but neither cholesterol nor phosphatidylcholine) using aromatic rich region and adjacent phosphocholine (POC) binding site, firm binding to the membrane (mainly driven by hydrophobic interactions) accompanied by the transfer of the N-terminal region to the lipid-water interface and finally pore formation after oligomerization of monomers. Cytolytic effects include red blood cells hemolysis, platelet aggregation and lysis, cytotoxic and cytostatic effects on fibroblasts. Lethality in mammals has been ascribed to severe vasospasm of coronary vessels, cardiac arrhythmia, and inotropic effects. The protein is DELTA-actitoxin-Aeq1a of Actinia equina (Beadlet anemone).